The following is a 278-amino-acid chain: Elongation factor Ts (278 aa).

Residues 82-85 (TEPV) form an involved in Mg(2+) ion dislocation from EF-Tu region.

Belongs to the EF-Ts family.

It is found in the cytoplasm. Its function is as follows. Associates with the EF-Tu.GDP complex and induces the exchange of GDP to GTP. It remains bound to the aminoacyl-tRNA.EF-Tu.GTP complex up to the GTP hydrolysis stage on the ribosome. The chain is Elongation factor Ts from Cytophaga hutchinsonii (strain ATCC 33406 / DSM 1761 / CIP 103989 / NBRC 15051 / NCIMB 9469 / D465).